Here is a 431-residue protein sequence, read N- to C-terminus: Adenylosuccinate synthetase (431 aa).

Residues 13-19 (GDEGKGK) and 41-43 (GHT) each bind GTP. Asp-14 acts as the Proton acceptor in catalysis. 2 residues coordinate Mg(2+): Asp-14 and Gly-41. IMP-binding positions include 14-17 (DEGK), 39-42 (NAGH), Thr-130, Arg-144, Gln-225, Thr-240, and Arg-304. Catalysis depends on His-42, which acts as the Proton donor. Position 300 to 306 (300 to 306 (AVTGRPR)) interacts with substrate. GTP is bound by residues Arg-306, 332-334 (KLD), and 415-417 (STG).

This sequence belongs to the adenylosuccinate synthetase family. Homodimer. Requires Mg(2+) as cofactor.

It is found in the cytoplasm. The enzyme catalyses IMP + L-aspartate + GTP = N(6)-(1,2-dicarboxyethyl)-AMP + GDP + phosphate + 2 H(+). It functions in the pathway purine metabolism; AMP biosynthesis via de novo pathway; AMP from IMP: step 1/2. Functionally, plays an important role in the de novo pathway of purine nucleotide biosynthesis. Catalyzes the first committed step in the biosynthesis of AMP from IMP. This Legionella pneumophila (strain Lens) protein is Adenylosuccinate synthetase.